Here is a 330-residue protein sequence, read N- to C-terminus: Solute-binding protein NAS141_03721 (330 aa).

The signal sequence occupies residues M1–A27. Residues E75, N97, R153, R173, Y196, N213–E214, and R240 contribute to the alpha-D-mannuronate site. Alpha-D-taluronate-binding positions include E75, N97, R153, R173, Y196, N213–E214, and R240.

This sequence belongs to the bacterial solute-binding protein 7 family. The complex is comprised of an extracytoplasmic solute-binding protein and a heteromeric permease formed by two transmembrane proteins.

The protein resides in the periplasm. Functionally, solute-binding protein that binds D-mannuronate and D-taluronate (in vitro). Probably part of a tripartite ATP-independent periplasmic (TRAP) transport system that mediates solute transport into the cytoplasm. This is Solute-binding protein NAS141_03721 from Sulfitobacter sp. (strain NAS-14.1).